The primary structure comprises 428 residues: Histidine--tRNA ligase (428 aa).

This sequence belongs to the class-II aminoacyl-tRNA synthetase family. Homodimer.

The protein localises to the cytoplasm. The enzyme catalyses tRNA(His) + L-histidine + ATP = L-histidyl-tRNA(His) + AMP + diphosphate + H(+). The chain is Histidine--tRNA ligase from Buchnera aphidicola subsp. Schizaphis graminum (strain Sg).